A 353-amino-acid polypeptide reads, in one-letter code: Phosphate acyltransferase (353 aa).

The protein belongs to the PlsX family. As to quaternary structure, homodimer. Probably interacts with PlsY.

It localises to the cytoplasm. It catalyses the reaction a fatty acyl-[ACP] + phosphate = an acyl phosphate + holo-[ACP]. Its pathway is lipid metabolism; phospholipid metabolism. Catalyzes the reversible formation of acyl-phosphate (acyl-PO(4)) from acyl-[acyl-carrier-protein] (acyl-ACP). This enzyme utilizes acyl-ACP as fatty acyl donor, but not acyl-CoA. The protein is Phosphate acyltransferase of Rhodopseudomonas palustris (strain BisB18).